Consider the following 171-residue polypeptide: RxLR effector protein CRE7 (171 aa).

The first 23 residues, 1-23 (MRAIAILLAVVATIFASLHGVSA), serve as a signal peptide directing secretion. The RxLR-dEER motif lies at 46 to 59 (RRLRQTGDASDEER).

Belongs to the RxLR effector family.

The protein resides in the secreted. It localises to the host cell. In terms of biological role, effector that is involved in host plant infection. Contributes to virulence during the early infection stage, by inhibiting plant defense responses induced by both PAMP-triggered immunity (PTI) and effector-triggered immunity (ETI). The protein is RxLR effector protein CRE7 of Phytophthora infestans (strain T30-4) (Potato late blight agent).